The following is a 520-amino-acid chain: Cyclic GMP-AMP synthase-like receptor (520 aa).

ATP contacts are provided by residues Ser68 and 80–82 (EFD). 3 residues coordinate Mg(2+): Glu80, Asp82, and Asp198. GTP is bound at residue Asp198. Lys264 contributes to the ATP binding site. Mn(2+) contacts are provided by Leu288 and Asp294.

It belongs to the mab-21 family. It depends on Mg(2+) as a cofactor. The cofactor is Mn(2+).

The catalysed reaction is GTP + ATP = 2',3'-cGAMP + 2 diphosphate. The enzyme catalyses GTP + ATP = pppGp(2'-5')A + diphosphate. It carries out the reaction pppGp(2'-5')A = 2',3'-cGAMP + diphosphate. In terms of biological role, nucleotidyltransferase that catalyzes the formation of cyclic GMP-AMP (2',3'-cGAMP) from ATP and GTP and plays a key role in innate immunity. Acts as a key sensor of double-stranded RNA (dsRNA), the presence of dsRNA in the cytoplasm being a danger signal that triggers the immune responses. Directly binds dsRNA, activating the nucleotidyltransferase activity, leading to synthesis of 2',3'-cGAMP, a second messenger that binds to and activates Sting, thereby triggering the immune response via activation of the NF-kappa-B transcription factor. In Microplitis demolitor (Parasitoid wasp), this protein is Cyclic GMP-AMP synthase-like receptor.